The sequence spans 638 residues: Autolysin (638 aa).

The first 28 residues, 1–28, serve as a signal peptide directing secretion; the sequence is MSLATRRFGAAAALLVAACVLCTAPAWA. Positions 29 to 183 are cleaved as a propeptide — activation peptide; sequence QNETTGTGMV…LKSILKGSQK (155 aa). Asparagine 30 carries an N-linked (GlcNAc...) asparagine glycan. The Cysteine switch signature appears at 95-102; sequence PRCNVPRA. Cysteine 97 is a binding site for Zn(2+). N-linked (GlcNAc...) asparagine glycosylation occurs at asparagine 126. The tract at residues 269-292 is disordered; the sequence is VTPPPRPPRPPRPPPRAGSTISSL. A compositionally biased stretch (pro residues) spans 270 to 284; that stretch reads TPPPRPPRPPRPPPR. A glycan (N-linked (GlcNAc...) asparagine) is linked at asparagine 296. Histidine 396 lines the Zn(2+) pocket. Glutamate 397 is a catalytic residue. Histidine 400 and histidine 406 together coordinate Zn(2+). 4 N-linked (GlcNAc...) asparagine glycosylation sites follow: asparagine 458, asparagine 465, asparagine 470, and asparagine 523.

Belongs to the peptidase M11 family. It depends on Zn(2+) as a cofactor. In terms of processing, present in 2 forms: an inactive V-form in vegetative cells and an active and soluble G-form. The V-form enzyme may be converted to the G-form enzyme during gametic differentiation under nitrogen-starved conditions.

It localises to the periplasm. It is found in the secreted. The protein resides in the cell wall. It carries out the reaction Cleavage of the proline- and hydroxyproline-rich proteins of the Chlamydomonas cell wall. Also cleaves azocasein, gelatin and Leu-Trp-Met-|-Arg-Phe-Ala.. Mediates digestion of the cell walls of the 2 mating type gametes during mating as a necessary prelude to cell fusion. This enzyme acts specifically on the framework proteins (inner wall) of the cell wall, cleaving several model peptides at specific sites. The sequence is that of Autolysin from Chlamydomonas reinhardtii (Chlamydomonas smithii).